We begin with the raw amino-acid sequence, 81 residues long: Small cysteine-rich protein 6 (81 aa).

An N-terminal signal peptide occupies residues 1 to 23 (MDTKVACLLLIILGALTVQGAVS). Positions 24-25 (GN) are excised as a propeptide.

It belongs to the Cnidaria small cysteine-rich protein (SCRiP) family. beta subfamily. In terms of processing, contains 4 disulfide bonds.

The protein localises to the secreted. It is found in the nematocyst. Functionally, induces neurotoxic symptoms on zebrafish. Has also been claimed to be implied in calcification, but tests on homolog proteins suggest that proteins of this family have a neurotoxic function and not a calcification function. The chain is Small cysteine-rich protein 6 from Orbicella faveolata (Mountainous star coral).